Here is a 332-residue protein sequence, read N- to C-terminus: Glycerol-3-phosphate dehydrogenase [NAD(P)+] (332 aa).

3 residues coordinate NADPH: Trp-11, Arg-30, and Lys-108. Residues Lys-108, Gly-137, and Ser-139 each contribute to the sn-glycerol 3-phosphate site. Ala-141 contributes to the NADPH binding site. Sn-glycerol 3-phosphate is bound by residues Lys-192, Asp-245, Ser-255, Arg-256, and Asn-257. The Proton acceptor role is filled by Lys-192. Position 256 (Arg-256) interacts with NADPH. The NADPH site is built by Val-280 and Glu-282.

Belongs to the NAD-dependent glycerol-3-phosphate dehydrogenase family.

Its subcellular location is the cytoplasm. The enzyme catalyses sn-glycerol 3-phosphate + NAD(+) = dihydroxyacetone phosphate + NADH + H(+). The catalysed reaction is sn-glycerol 3-phosphate + NADP(+) = dihydroxyacetone phosphate + NADPH + H(+). It participates in membrane lipid metabolism; glycerophospholipid metabolism. Functionally, catalyzes the reduction of the glycolytic intermediate dihydroxyacetone phosphate (DHAP) to sn-glycerol 3-phosphate (G3P), the key precursor for phospholipid synthesis. In Paraburkholderia phymatum (strain DSM 17167 / CIP 108236 / LMG 21445 / STM815) (Burkholderia phymatum), this protein is Glycerol-3-phosphate dehydrogenase [NAD(P)+].